Here is a 545-residue protein sequence, read N- to C-terminus: Mesoderm induction early response protein 2 (545 aa).

Residue serine 11 is modified to Phosphoserine. Residues 100–189 (DPISDRESEG…SSDTEEDSLP (90 aa)) form a disordered region. The segment covering 140–153 (QSSADDLTPSVTSH) has biased composition (polar residues). The region spanning 195–292 (KEIMVGPQFQ…EALRRLRFNV (98 aa)) is the ELM2 domain. The 53-residue stretch at 297-349 (DGLCAWSEEECRNFEHGFRVHGKNFHLIQANKVRTRSVGECVEYYYLWKKSER) folds into the SANT domain. Positions 364 to 464 (YVPSGTTDAD…YQPAVTAPEP (101 aa)) are disordered.

Part of a complex containing at least CDYL, MIER1, MIER2, HDAC1 and HDAC2.

Its subcellular location is the nucleus. Functionally, transcriptional repressor. This Homo sapiens (Human) protein is Mesoderm induction early response protein 2 (MIER2).